The sequence spans 144 residues: Large ribosomal subunit protein uL15 (144 aa).

Polar residues predominate over residues 1–12 (MRLNTLSPSLGS). The disordered stretch occupies residues 1–51 (MRLNTLSPSLGSRKNHKRLGRGIGSGFGKTAGRGHKGQKSRSGGHVNRGFE). Gly residues predominate over residues 21-31 (RGIGSGFGKTA).

This sequence belongs to the universal ribosomal protein uL15 family. Part of the 50S ribosomal subunit.

Functionally, binds to the 23S rRNA. In Buchnera aphidicola subsp. Schizaphis graminum (strain Sg), this protein is Large ribosomal subunit protein uL15.